The following is a 290-amino-acid chain: uncharacterized protein (290 aa).

2 disordered regions span residues 1–98 (MLGQ…SRRV) and 209–236 (LSGQ…AATT). Positions 63–76 (KPDRVRPGQRDRIG) are enriched in basic and acidic residues. A compositionally biased stretch (low complexity) spans 87–97 (AGQARAASSRR). Residues 261-281 (CILTALLAVSFHSIGVVIMTS) form a helical membrane-spanning segment.

The protein localises to the membrane. This is an uncharacterized protein from Homo sapiens (Human).